Reading from the N-terminus, the 182-residue chain is Glutathione-regulated potassium-efflux system ancillary protein KefG (182 aa).

Belongs to the NAD(P)H dehydrogenase (quinone) family. KefG subfamily. As to quaternary structure, interacts with KefB.

Its subcellular location is the cell inner membrane. It catalyses the reaction a quinone + NADH + H(+) = a quinol + NAD(+). The catalysed reaction is a quinone + NADPH + H(+) = a quinol + NADP(+). Its function is as follows. Regulatory subunit of a potassium efflux system that confers protection against electrophiles. Required for full activity of KefB. This Yersinia pestis bv. Antiqua (strain Nepal516) protein is Glutathione-regulated potassium-efflux system ancillary protein KefG.